We begin with the raw amino-acid sequence, 410 residues long: Mating-type locus allele B3 protein (410 aa).

Residues 1–110 (MSRDPKLSLS…ANVVSPGEGC (110 aa)) are variable domain between B alleles. The segment at residues 107–184 (GEGCRNLSED…NARRRSGWSH (78 aa)) is a DNA-binding region (homeobox; TALE-type). Residues 111-410 (RNLSEDLPAY…PFLCLSVAFV (300 aa)) form a highly conserved between B alleles region. Disordered stretches follow at residues 203 to 224 (AKLS…PSDD) and 278 to 335 (TPKP…TPEL). Residues 205-219 (LSSSNQSTPPSLTSE) are compositionally biased toward polar residues. Positions 276–308 (KKTPKPGMPRPVTTVAKRHPARKTKPAAKPKSR) match the Nuclear localization signal motif. The span at 291-307 (AKRHPARKTKPAAKPKS) shows a compositional bias: basic residues. Over residues 312-335 (PRASTTPSIDSTLDSSKLESTPEL) the composition is skewed to polar residues. The interval 333–410 (PELSMCSTAD…PFLCLSVAFV (78 aa)) is not essential for B3 function.

It belongs to the TALE/M-ATYP homeobox family.

It is found in the nucleus. In terms of biological role, the B locus has at least 25 alleles, and any combination of two different B alleles yields a multimeric regulatory protein, that activates genes responsible for the pathogenicity and for the sexual development of the fungus within the corn plant. In Mycosarcoma maydis (Corn smut fungus), this protein is Mating-type locus allele B3 protein.